A 93-amino-acid chain; its full sequence is Large ribosomal subunit protein uL23c (93 aa).

This sequence belongs to the universal ribosomal protein uL23 family. As to quaternary structure, part of the 50S ribosomal subunit.

It is found in the plastid. Its subcellular location is the chloroplast. Functionally, binds to 23S rRNA. In Adiantum capillus-veneris (Maidenhair fern), this protein is Large ribosomal subunit protein uL23c (rpl23).